The sequence spans 359 residues: DNA integrity scanning protein DisA (359 aa).

The DAC domain maps to 10 to 148 (ELDLLDIVQF…GNRRYTLKDI (139 aa)). ATP-binding positions include Gly-77, Leu-95, and 108 to 112 (MRHRT).

This sequence belongs to the DisA family. As to quaternary structure, homooctamer. Requires Mg(2+) as cofactor.

The enzyme catalyses 2 ATP = 3',3'-c-di-AMP + 2 diphosphate. Its function is as follows. Participates in a DNA-damage check-point that is active prior to asymmetric division when DNA is damaged. DisA forms globular foci that rapidly scan along the chromosomes during sporulation, searching for lesions. When a lesion is present, DisA pauses at the lesion site. This triggers a cellular response that culminates in a temporary block in sporulation initiation. Functionally, also has diadenylate cyclase activity, catalyzing the condensation of 2 ATP molecules into cyclic di-AMP (c-di-AMP). c-di-AMP acts as a signaling molecule that couples DNA integrity with progression of sporulation. The rise in c-di-AMP level generated by DisA while scanning the chromosome, operates as a positive signal that advances sporulation; upon encountering a lesion, the DisA focus arrests at the damaged site and halts c-di-AMP synthesis. This is DNA integrity scanning protein DisA from Bacillus pumilus (strain SAFR-032).